We begin with the raw amino-acid sequence, 292 residues long: MNRIRYCFELVSVLFLMFTANARARGRGAIDFDVNYVVTWGQDHILKLNQGKEVQLSMDYSSGSGFESKSHYGSGFFQMRIKLPPRDSAGVVTAFYLTSKGDTHDEVDFEFLGNRQGKPIAIQTNVFSNGQGGREQKFVPWFDPTTSFHTYGILWNPYQIVFYVDKVPIRVFKNIKKSGVNYPSKPMQLVASLWNGENWATSGGKEKINWAYAPFKAQYQGFSDHGCHVNGQSNNANVCGSTRYWWNTRTYSQLSANEQKVMENVRAKYMTYDYCSDRPRYPVPPSECRWNQ.

The N-terminal stretch at Met-1 to Ala-24 is a signal peptide. The GH16 domain occupies Arg-25 to Tyr-219. The Nucleophile role is filled by Glu-106. The active-site Proton donor is the Glu-110. Xyloglucan contacts are provided by residues Glu-110, Gln-123–Asn-125, Gly-133–Glu-135, Asn-198–Trp-199, and Gly-203. Cystine bridges form between Cys-227–Cys-239 and Cys-275–Cys-288. A xyloglucan-binding site is contributed by Arg-280.

This sequence belongs to the glycosyl hydrolase 16 family. XTH group 1 subfamily. In terms of processing, contains at least one intrachain disulfide bond essential for its enzymatic activity.

The protein resides in the secreted. Its subcellular location is the cell wall. It localises to the extracellular space. The protein localises to the apoplast. The enzyme catalyses breaks a beta-(1-&gt;4) bond in the backbone of a xyloglucan and transfers the xyloglucanyl segment on to O-4 of the non-reducing terminal glucose residue of an acceptor, which can be a xyloglucan or an oligosaccharide of xyloglucan.. May catalyze xyloglucan endohydrolysis (XEH) and/or endotransglycosylation (XET). Cleaves and religates xyloglucan polymers, an essential constituent of the primary cell wall, and thereby participates in cell wall construction of growing tissues. The chain is Xyloglucan endotransglucosylase/hydrolase protein 2 (XTH2) from Arabidopsis thaliana (Mouse-ear cress).